The chain runs to 409 residues: Nucleoprotein (409 aa).

Disordered stretches follow at residues Met-1 to Gly-31, Leu-44 to Arg-84, Arg-164 to Leu-196, and Val-238 to Met-258. Positions Pro-15–Gly-31 are enriched in low complexity. The interval Ser-29–Leu-160 is RNA-binding. One can recognise a CoV N NTD domain in the interval Gly-31–Asp-156. Over residues Tyr-70 to Arg-84 the composition is skewed to basic residues. Residues Gly-166–Ala-179 show a composition bias toward low complexity. 2 stretches are compositionally biased toward basic and acidic residues: residues Pro-180–Ser-192 and Lys-247–Met-258. 2 positions are modified to phosphoserine; by host: Ser-190 and Ser-192. One can recognise a CoV N CTD domain in the interval Thr-215 to Pro-331. The dimerization stretch occupies residues Arg-226 to Asp-333. A disulfide bridge links Cys-320 with Cys-323. The segment at Gly-326 to Leu-409 is disordered. Basic residues predominate over residues Gln-358 to Lys-367. A compositionally biased stretch (basic and acidic residues) spans Lys-368 to Asn-384. A Phosphothreonine; by host modification is found at Thr-378. Ser-379 carries the phosphoserine; by host modification.

It belongs to the gammacoronavirus nucleocapsid protein family. Homooligomer. Both monomeric and oligomeric forms interact with RNA. Interacts with protein M. Interacts with NSP3; this interaction serves to tether the genome to the newly translated replicase-transcriptase complex at a very early stage of infection. ADP-ribosylated. The ADP-ribosylation is retained in the virion during infection. Post-translationally, phosphorylated on serine and threonine residues.

The protein resides in the virion. It is found in the host endoplasmic reticulum-Golgi intermediate compartment. Its subcellular location is the host Golgi apparatus. Its function is as follows. Packages the positive strand viral genome RNA into a helical ribonucleocapsid (RNP) and plays a fundamental role during virion assembly through its interactions with the viral genome and membrane protein M. Plays an important role in enhancing the efficiency of subgenomic viral RNA transcription as well as viral replication. This is Nucleoprotein from Gallus gallus (Chicken).